Consider the following 476-residue polypeptide: ATP synthase subunit beta (476 aa).

154–161 provides a ligand contact to ATP; it reads GGAGVGKT.

It belongs to the ATPase alpha/beta chains family. In terms of assembly, F-type ATPases have 2 components, CF(1) - the catalytic core - and CF(0) - the membrane proton channel. CF(1) has five subunits: alpha(3), beta(3), gamma(1), delta(1), epsilon(1). CF(0) has four main subunits: a(1), b(1), b'(1) and c(9-12).

The protein localises to the cell inner membrane. The catalysed reaction is ATP + H2O + 4 H(+)(in) = ADP + phosphate + 5 H(+)(out). In terms of biological role, produces ATP from ADP in the presence of a proton gradient across the membrane. The catalytic sites are hosted primarily by the beta subunits. The polypeptide is ATP synthase subunit beta (Rhodopseudomonas palustris (strain HaA2)).